We begin with the raw amino-acid sequence, 181 residues long: MICGIDEVGRGCIFGPILSAAVVFKKKPSFIKELDDSKKLKKEKREYLSSLILENSYYAFAEISNITIEKINIHNASLLAMQTAYENLKLNCSLVLVDGKFVPKITAKNVKAIIKGDSIIDEIKAASIIAKVKRDKLMDKYDKIYPLYLLKKNKGYPTKEHKNAIKKYGVLSLHRKNFKLI.

Residues 1 to 181 enclose the RNase H type-2 domain; sequence MICGIDEVGR…SLHRKNFKLI (181 aa). Positions 6, 7, and 98 each coordinate a divalent metal cation.

Belongs to the RNase HII family. Requires Mn(2+) as cofactor. Mg(2+) is required as a cofactor.

The protein localises to the cytoplasm. It catalyses the reaction Endonucleolytic cleavage to 5'-phosphomonoester.. Endonuclease that specifically degrades the RNA of RNA-DNA hybrids. The polypeptide is Ribonuclease HII (rnhB) (Borreliella burgdorferi (strain ATCC 35210 / DSM 4680 / CIP 102532 / B31) (Borrelia burgdorferi)).